Reading from the N-terminus, the 394-residue chain is Flavin-dependent monooxygenase, oxygenase subunit HsaA (394 aa).

FMN is bound by residues Trp-84, 118–120 (SSY), 141–143 (WSS), Arg-263, 346–347 (AT), and 368–369 (HA).

The protein belongs to the HpaH/HsaA monooxygenase family. Homotetramer under anaerobic conditions. HsaAB monooxygenase consists of an oxygenase component HsaA and a reductase component HsaB.

It carries out the reaction 3-hydroxy-9,10-secoandrosta-1,3,5(10)-triene-9,17-dione + FMNH2 + O2 = 3,4-dihydroxy-9,10-secoandrosta-1,3,5(10)-triene-9,17-dione + FMN + H2O + H(+). The protein operates within lipid metabolism; steroid biosynthesis. Catalyzes the o-hydroxylation of 3-hydroxy-9,10-secoandrosta-1,3,5(10)-triene-9,17-dione (3-HSA) to 3,4-dihydroxy-9,10-secoandrosta-1,3,5(10)-triene-9,17-dione (3,4-DHSA) in the catabolism of cholesterol. In Mycobacterium tuberculosis (strain CDC 1551 / Oshkosh), this protein is Flavin-dependent monooxygenase, oxygenase subunit HsaA.